Reading from the N-terminus, the 515-residue chain is Hyccin (515 aa).

A compositionally biased stretch (low complexity) spans 358–378; sequence STSQSALSNSSNTSSKNLLGK. Disordered stretches follow at residues 358 to 410 and 491 to 515; these read STSQ…TQRA and TDLP…LSTD. A compositionally biased stretch (basic and acidic residues) spans 389–403; that stretch reads AGREKEGETCREHLS. Residues 498–515 show a composition bias toward polar residues; sequence KQPNQQRPPSISITLSTD.

It belongs to the Hyccin family. In terms of assembly, component of a phosphatidylinositol 4-kinase (PI4K) complex.

It is found in the cytoplasm. It localises to the cytosol. The protein resides in the cell membrane. Component of a complex required to localize phosphatidylinositol 4-kinase (PI4K) to the plasma membrane. The complex acts as a regulator of phosphatidylinositol 4-phosphate (PtdIns(4)P) synthesis. This is Hyccin (HYCC1) from Gallus gallus (Chicken).